The sequence spans 239 residues: Norbelladine 4'-O-methyltransferase 3 (239 aa).

S-adenosyl-L-methionine-binding positions include V55, E77, 79–80 (GV), S85, D103, and A132. Position 155 (D155) interacts with a divalent metal cation. D157 is a binding site for S-adenosyl-L-methionine. A divalent metal cation-binding residues include D181 and N182.

This sequence belongs to the class I-like SAM-binding methyltransferase superfamily. Cation-dependent O-methyltransferase family. Mg(2+) serves as cofactor.

It carries out the reaction norbelladine + S-adenosyl-L-methionine = 4'-O-methylnorbelladine + S-adenosyl-L-homocysteine + H(+). It participates in alkaloid biosynthesis. In terms of biological role, 4'-O-methyltransferase converting norbelladine to 4'-O-methylnorbelladine. 4'-O-methylnorbelladine is a precursor to all Amaryllidaceae alkaloids such as galanthamine, lycorine and haemanthamine, and including haemanthamine- and crinamine-type alkaloids, promising anticancer agents. The sequence is that of Norbelladine 4'-O-methyltransferase 3 from Narcissus aff. pseudonarcissus MK-2014 (Daffodil).